The chain runs to 120 residues: Seripauperin-20 (120 aa).

The chain crosses the membrane as a helical span at residues 7-25 (IAAGVAAIAAGASATTTLA).

This sequence belongs to the SRP1/TIP1 family. Seripauperin subfamily.

It localises to the membrane. This is Seripauperin-20 (PAU20) from Saccharomyces cerevisiae (strain ATCC 204508 / S288c) (Baker's yeast).